We begin with the raw amino-acid sequence, 335 residues long: Legumin type B (335 aa).

Disordered stretches follow at residues 47-87 and 102-155; these read PETQ…GNSV and TEED…GRNG. The span at 105–118 shows a compositional bias: basic and acidic residues; sequence DTAKRLRSPRDKRN. The segment covering 135–144 has biased composition (acidic residues); it reads QQEEEEQEEE. One can recognise a Cupin type-1 domain in the interval 167–314; that stretch reads ENIAQPARAD…AFGLRQRQVT (148 aa).

The protein belongs to the 11S seed storage protein (globulins) family. As to quaternary structure, hexamer; each subunit is composed of an acidic and a basic chain derived from a single precursor and linked by a disulfide bond.

This protein found in the seeds of many leguminous and non-leguminous plants is the source of sulfur-containing amino acids in seed meals. This Vicia faba (Broad bean) protein is Legumin type B (LEB7).